Here is a 698-residue protein sequence, read N- to C-terminus: Probable microcin-H47 secretion/processing ATP-binding protein MchF (698 aa).

A Peptidase C39 domain is found at 26 to 145 (QTETAECGLA…RYFTGIALEV (120 aa)). Residue Cys32 is part of the active site. 5 helical membrane-spanning segments follow: residues 33–53 (GLAC…LISL), 90–110 (LGAL…VVLV), 289–311 (TCVV…MLLY), 315–337 (LTWI…YGYY), and 397–417 (LLFG…ILWL). Residues 176–458 (LAKIFCLSVV…LTSFLLQLRI (283 aa)) form the ABC transmembrane type-1 domain. An ABC transporter domain is found at 492-698 (LETTDLSYRY…LRTVDRIISI (207 aa)). An ATP-binding site is contributed by 526 to 533 (GASGAGKT).

This sequence belongs to the ABC transporter superfamily.

The protein localises to the cell membrane. Its function is as follows. Probably involved, in conjunction with MchE, in the secretion of microcin H47. In Escherichia coli, this protein is Probable microcin-H47 secretion/processing ATP-binding protein MchF (mchF).